A 605-amino-acid polypeptide reads, in one-letter code: Capsid scaffolding protein (605 aa).

Active-site charge relay system residues include His-48, Ser-116, and His-139. The segment at Ala-235–Gly-274 is disordered. Positions Gln-281–Asp-300 are interaction with pAP. Disordered stretches follow at residues Asp-403–Glu-431 and Pro-489–Ser-588. Positions Arg-410 to Arg-416 match the Nuclear localization signal motif. The span at Ala-568–Pro-579 shows a compositional bias: polar residues. Positions Lys-585–Ala-605 are interaction with major capsid protein.

It belongs to the herpesviridae capsid scaffolding protein family. Homomultimer. Interacts with major capsid protein. As to quaternary structure, exists in a monomer-dimer equilibrium with the dimer being the active species. Capsid scaffolding protein is cleaved by assemblin after formation of the spherical procapsid. As a result, the capsid obtains its mature, icosahedral shape. Cleavages occur at two or more sites: release (R-site) and maturation (M-site).

It is found in the host cytoplasm. The protein localises to the host nucleus. It catalyses the reaction Cleaves -Ala-|-Ser- and -Ala-|-Ala- bonds in the scaffold protein.. Functionally, acts as a scaffold protein by binding major capsid protein in the cytoplasm, inducing the nuclear localization of both proteins. Multimerizes in the nucleus such as major capsid protein forms the icosahedral T=16 capsid. Autocatalytic cleavage releases the assembly protein, and subsequently abolishes interaction with major capsid protein. Cleavages products are evicted from the capsid before or during DNA packaging. Protease that plays an essential role in virion assembly within the nucleus. Catalyzes the cleavage of the assembly protein after formation of the spherical procapsid. By that cleavage, the capsid matures and gains its icosahedral shape. The cleavage sites seem to include -Ala-Ser-, -Ala-Ala-, as well as Ala-Thr bonds. Assemblin and cleavages products are evicted from the capsid before or during DNA packaging. Its function is as follows. Plays a major role in capsid assembly. Acts as a scaffold protein by binding major capsid protein. Multimerizes in the nucleus such as major capsid protein forms the icosahedral T=16 capsid. Cleaved by assemblin after capsid completion. The cleavages products are evicted from the capsid before or during DNA packaging. In Homo sapiens (Human), this protein is Capsid scaffolding protein.